Here is a 101-residue protein sequence, read N- to C-terminus: Ferredoxin Fdx2 (101 aa).

2 consecutive 4Fe-4S ferredoxin-type domains span residues 1-29 (MATY…EGDE) and 31-64 (YVID…PNPQ). [4Fe-4S] cluster is bound by residues Cys-9, Cys-12, Cys-15, Cys-19, Cys-38, Cys-41, Cys-50, and Cys-54.

[4Fe-4S] cluster is required as a cofactor.

In terms of biological role, ferredoxins are iron-sulfur proteins that transfer electrons in a wide variety of metabolic reactions. Fdx2 can receive electrons from both FdR_A and FdR_B ferredoxin reductases, with a preference for FdR_B compared with FdR_A, and transfer the electrons to the cytochrome P450 CYP260A1. This is Ferredoxin Fdx2 from Sorangium cellulosum (strain So ce56) (Polyangium cellulosum (strain So ce56)).